Consider the following 355-residue polypeptide: UDP-N-acetylglucosamine--N-acetylmuramyl-(pentapeptide) pyrophosphoryl-undecaprenol N-acetylglucosamine transferase (355 aa).

Residues 15–17, asparagine 127, arginine 163, serine 191, isoleucine 244, 263–268, and glutamine 288 contribute to the UDP-N-acetyl-alpha-D-glucosamine site; these read TGG and ALTVSE.

Belongs to the glycosyltransferase 28 family. MurG subfamily.

It localises to the cell inner membrane. It carries out the reaction di-trans,octa-cis-undecaprenyl diphospho-N-acetyl-alpha-D-muramoyl-L-alanyl-D-glutamyl-meso-2,6-diaminopimeloyl-D-alanyl-D-alanine + UDP-N-acetyl-alpha-D-glucosamine = di-trans,octa-cis-undecaprenyl diphospho-[N-acetyl-alpha-D-glucosaminyl-(1-&gt;4)]-N-acetyl-alpha-D-muramoyl-L-alanyl-D-glutamyl-meso-2,6-diaminopimeloyl-D-alanyl-D-alanine + UDP + H(+). The protein operates within cell wall biogenesis; peptidoglycan biosynthesis. Functionally, cell wall formation. Catalyzes the transfer of a GlcNAc subunit on undecaprenyl-pyrophosphoryl-MurNAc-pentapeptide (lipid intermediate I) to form undecaprenyl-pyrophosphoryl-MurNAc-(pentapeptide)GlcNAc (lipid intermediate II). This chain is UDP-N-acetylglucosamine--N-acetylmuramyl-(pentapeptide) pyrophosphoryl-undecaprenol N-acetylglucosamine transferase, found in Salmonella paratyphi B (strain ATCC BAA-1250 / SPB7).